A 375-amino-acid chain; its full sequence is Anhydro-N-acetylmuramic acid kinase (375 aa).

12 to 19 (GTSLDGVD) contacts ATP.

Belongs to the anhydro-N-acetylmuramic acid kinase family.

The enzyme catalyses 1,6-anhydro-N-acetyl-beta-muramate + ATP + H2O = N-acetyl-D-muramate 6-phosphate + ADP + H(+). The protein operates within amino-sugar metabolism; 1,6-anhydro-N-acetylmuramate degradation. It functions in the pathway cell wall biogenesis; peptidoglycan recycling. Functionally, catalyzes the specific phosphorylation of 1,6-anhydro-N-acetylmuramic acid (anhMurNAc) with the simultaneous cleavage of the 1,6-anhydro ring, generating MurNAc-6-P. Is required for the utilization of anhMurNAc either imported from the medium or derived from its own cell wall murein, and thus plays a role in cell wall recycling. The polypeptide is Anhydro-N-acetylmuramic acid kinase (Mannheimia succiniciproducens (strain KCTC 0769BP / MBEL55E)).